The following is a 657-amino-acid chain: uncharacterized protein (657 aa).

Residues 1–17 (MACVLACVAVLIGAASA) form the signal peptide.

This is an uncharacterized protein from Orgyia pseudotsugata (Douglas-fir tussock moth).